The following is a 261-amino-acid chain: Thiamine thiazole synthase (261 aa).

Residues Ala33, Glu52–Arg53, Gly60, Val124, and His152–Asp154 contribute to the NAD(+) site. Fe cation is bound by residues Asp154 and His169. Ile219 serves as a coordination point for NAD(+). Arg229 is a glycine binding site.

It belongs to the THI4 family. In terms of assembly, homooctamer; tetramer of dimers. It depends on Fe(2+) as a cofactor.

It catalyses the reaction hydrogen sulfide + glycine + NAD(+) = ADP-5-ethyl-4-methylthiazole-2-carboxylate + nicotinamide + 3 H2O + H(+). It participates in cofactor biosynthesis; thiamine diphosphate biosynthesis. Functionally, involved in the biosynthesis of the thiazole moiety of thiamine. Catalyzes the conversion of NAD and glycine to adenosine diphosphate 5-(2-hydroxyethyl)-4-methylthiazole-2-carboxylate (ADT), an adenylated thiazole intermediate, using free sulfide as a source of sulfur. The polypeptide is Thiamine thiazole synthase (Pyrobaculum calidifontis (strain DSM 21063 / JCM 11548 / VA1)).